A 206-amino-acid polypeptide reads, in one-letter code: Ribosomal RNA small subunit methyltransferase G (206 aa).

Residues Gly-73, Leu-78, 124-125, and Arg-139 contribute to the S-adenosyl-L-methionine site; that span reads VE.

This sequence belongs to the methyltransferase superfamily. RNA methyltransferase RsmG family.

It localises to the cytoplasm. It carries out the reaction guanosine(527) in 16S rRNA + S-adenosyl-L-methionine = N(7)-methylguanosine(527) in 16S rRNA + S-adenosyl-L-homocysteine. Functionally, specifically methylates the N7 position of guanine in position 527 of 16S rRNA. This Edwardsiella ictaluri (strain 93-146) protein is Ribosomal RNA small subunit methyltransferase G.